We begin with the raw amino-acid sequence, 834 residues long: Leucine--tRNA ligase (834 aa).

Positions 40–50 (PYPSGNIHMGH) match the 'HIGH' region motif. The 'KMSKS' region signature appears at 586–590 (KMSKS). Lys589 serves as a coordination point for ATP.

It belongs to the class-I aminoacyl-tRNA synthetase family.

The protein resides in the cytoplasm. The enzyme catalyses tRNA(Leu) + L-leucine + ATP = L-leucyl-tRNA(Leu) + AMP + diphosphate. The chain is Leucine--tRNA ligase from Nitratidesulfovibrio vulgaris (strain DSM 19637 / Miyazaki F) (Desulfovibrio vulgaris).